A 402-amino-acid chain; its full sequence is NADH-quinone oxidoreductase subunit D 2 (402 aa).

It belongs to the complex I 49 kDa subunit family. In terms of assembly, NDH-1 is composed of 14 different subunits. Subunits NuoB, C, D, E, F, and G constitute the peripheral sector of the complex.

The protein localises to the cell inner membrane. It catalyses the reaction a quinone + NADH + 5 H(+)(in) = a quinol + NAD(+) + 4 H(+)(out). In terms of biological role, NDH-1 shuttles electrons from NADH, via FMN and iron-sulfur (Fe-S) centers, to quinones in the respiratory chain. The immediate electron acceptor for the enzyme in this species is believed to be ubiquinone. Couples the redox reaction to proton translocation (for every two electrons transferred, four hydrogen ions are translocated across the cytoplasmic membrane), and thus conserves the redox energy in a proton gradient. This is NADH-quinone oxidoreductase subunit D 2 from Nitrobacter hamburgensis (strain DSM 10229 / NCIMB 13809 / X14).